The following is a 388-amino-acid chain: Acetate kinase (388 aa).

Asn7 contributes to the Mg(2+) binding site. Residue Lys14 coordinates ATP. Substrate is bound at residue Arg76. Asp133 functions as the Proton donor/acceptor in the catalytic mechanism. ATP-binding positions include 193 to 197 (HLGNG), 267 to 269 (DMR), and 315 to 319 (GIGEN). Glu374 is a binding site for Mg(2+).

Belongs to the acetokinase family. Homodimer. It depends on Mg(2+) as a cofactor. Mn(2+) serves as cofactor.

The protein resides in the cytoplasm. It carries out the reaction acetate + ATP = acetyl phosphate + ADP. Its pathway is metabolic intermediate biosynthesis; acetyl-CoA biosynthesis; acetyl-CoA from acetate: step 1/2. Catalyzes the formation of acetyl phosphate from acetate and ATP. Can also catalyze the reverse reaction. This chain is Acetate kinase, found in Micrococcus luteus (strain ATCC 4698 / DSM 20030 / JCM 1464 / CCM 169 / CCUG 5858 / IAM 1056 / NBRC 3333 / NCIMB 9278 / NCTC 2665 / VKM Ac-2230) (Micrococcus lysodeikticus).